Reading from the N-terminus, the 128-residue chain is Large ribosomal subunit protein bL17 (128 aa).

It belongs to the bacterial ribosomal protein bL17 family. In terms of assembly, part of the 50S ribosomal subunit. Contacts protein L32.

The protein is Large ribosomal subunit protein bL17 of Ehrlichia ruminantium (strain Gardel).